The chain runs to 98 residues: NADH-ubiquinone oxidoreductase chain 4L (98 aa).

The next 3 helical transmembrane spans lie at 1–21 (MPVI…GLLI), 29–49 (SLLC…TLAL), and 61–81 (IILL…LVMV).

Belongs to the complex I subunit 4L family. As to quaternary structure, core subunit of respiratory chain NADH dehydrogenase (Complex I) which is composed of 45 different subunits.

The protein localises to the mitochondrion inner membrane. The enzyme catalyses a ubiquinone + NADH + 5 H(+)(in) = a ubiquinol + NAD(+) + 4 H(+)(out). In terms of biological role, core subunit of the mitochondrial membrane respiratory chain NADH dehydrogenase (Complex I) which catalyzes electron transfer from NADH through the respiratory chain, using ubiquinone as an electron acceptor. Part of the enzyme membrane arm which is embedded in the lipid bilayer and involved in proton translocation. This Echinops telfairi (Lesser hedgehog tenrec) protein is NADH-ubiquinone oxidoreductase chain 4L (MT-ND4L).